A 329-amino-acid chain; its full sequence is Holliday junction branch migration complex subunit RuvB (329 aa).

Residues 1 to 20 form a disordered region; sequence MSRILEGDPVEGEKSWENEL. The tract at residues 1–181 is large ATPase domain (RuvB-L); that stretch reads MSRILEGDPV…FGIVERLQFY (181 aa). Over residues 11–20 the composition is skewed to basic and acidic residues; the sequence is EGEKSWENEL. ATP-binding positions include Leu20, Arg21, Gly62, Lys65, Thr66, Thr67, 128 to 130, Arg171, Tyr181, and Arg218; that span reads EDY. Residue Thr66 coordinates Mg(2+). The segment at 182–252 is small ATPAse domain (RuvB-S); sequence DKDALRQILM…IAVYALNQLG (71 aa). Residues 255–329 form a head domain (RuvB-H) region; the sequence is QYGLDLMDRR…FAKSSVLADK (75 aa). Residues Arg291, Lys310, and Arg315 each coordinate DNA.

The protein belongs to the RuvB family. As to quaternary structure, homohexamer. Forms an RuvA(8)-RuvB(12)-Holliday junction (HJ) complex. HJ DNA is sandwiched between 2 RuvA tetramers; dsDNA enters through RuvA and exits via RuvB. An RuvB hexamer assembles on each DNA strand where it exits the tetramer. Each RuvB hexamer is contacted by two RuvA subunits (via domain III) on 2 adjacent RuvB subunits; this complex drives branch migration. In the full resolvosome a probable DNA-RuvA(4)-RuvB(12)-RuvC(2) complex forms which resolves the HJ.

The protein resides in the cytoplasm. The enzyme catalyses ATP + H2O = ADP + phosphate + H(+). In terms of biological role, the RuvA-RuvB-RuvC complex processes Holliday junction (HJ) DNA during genetic recombination and DNA repair, while the RuvA-RuvB complex plays an important role in the rescue of blocked DNA replication forks via replication fork reversal (RFR). RuvA specifically binds to HJ cruciform DNA, conferring on it an open structure. The RuvB hexamer acts as an ATP-dependent pump, pulling dsDNA into and through the RuvAB complex. RuvB forms 2 homohexamers on either side of HJ DNA bound by 1 or 2 RuvA tetramers; 4 subunits per hexamer contact DNA at a time. Coordinated motions by a converter formed by DNA-disengaged RuvB subunits stimulates ATP hydrolysis and nucleotide exchange. Immobilization of the converter enables RuvB to convert the ATP-contained energy into a lever motion, pulling 2 nucleotides of DNA out of the RuvA tetramer per ATP hydrolyzed, thus driving DNA branch migration. The RuvB motors rotate together with the DNA substrate, which together with the progressing nucleotide cycle form the mechanistic basis for DNA recombination by continuous HJ branch migration. Branch migration allows RuvC to scan DNA until it finds its consensus sequence, where it cleaves and resolves cruciform DNA. The sequence is that of Holliday junction branch migration complex subunit RuvB from Bdellovibrio bacteriovorus (strain ATCC 15356 / DSM 50701 / NCIMB 9529 / HD100).